The primary structure comprises 389 residues: COP9 signalosome complex subunit 11 (389 aa).

Residues glutamine 143 to methionine 312 form the PCI domain.

Component of a COP9 signalosome-like (CSN) complex.

The protein localises to the cytoplasm. Its subcellular location is the nucleus. Component of the COP9 signalosome (CSN) complex that acts as an regulator of the ubiquitin (Ubl) conjugation pathway by mediating the deneddylation of the cullin subunit of SCF-type E3 ubiquitin-protein ligase complexes The CSN complex is involved in the regulation of the mating pheromone response. PCI8 may also be involved in transcriptional and translational control. This is COP9 signalosome complex subunit 11 (PCI8) from Kluyveromyces lactis (strain ATCC 8585 / CBS 2359 / DSM 70799 / NBRC 1267 / NRRL Y-1140 / WM37) (Yeast).